Consider the following 663-residue polypeptide: Translation factor GUF1 homolog, mitochondrial (663 aa).

Residues 1–33 constitute a mitochondrion transit peptide; that stretch reads MAGAAALRRSARRVVLPGAYALSRALQHPERLL. The tr-type G domain maps to 55-247; sequence ERVRNFSIIA…AVIERIPSPP (193 aa). GTP is bound by residues 64-71, 140-144, and 194-197; these read AHVDHGKS, DTPGH, and NKID.

This sequence belongs to the TRAFAC class translation factor GTPase superfamily. Classic translation factor GTPase family. LepA subfamily.

The protein resides in the mitochondrion inner membrane. It catalyses the reaction GTP + H2O = GDP + phosphate + H(+). Promotes mitochondrial protein synthesis. May act as a fidelity factor of the translation reaction, by catalyzing a one-codon backward translocation of tRNAs on improperly translocated ribosomes. Binds to mitochondrial ribosomes in a GTP-dependent manner. The chain is Translation factor GUF1 homolog, mitochondrial from Oryza sativa subsp. japonica (Rice).